We begin with the raw amino-acid sequence, 84 residues long: U7-ctenitoxin-Pn1a (84 aa).

Residues 1 to 17 (MKLCILLVVLLITVVRA) form the signal peptide. Positions 18–38 (EEDILENEAEDISPAIKERSA) are excised as a propeptide. Cystine bridges form between Cys41/Cys56, Cys48/Cys61, Cys55/Cys78, and Cys63/Cys76.

Expressed by the venom gland.

It is found in the secreted. In terms of biological role, antagonist of L-type calcium channels (Cav1/CACNA1). Causes paralysis in the posterior limbs and gradual decreases in movement and aggression during 24 hours at dose levels of 5 ug per mouse. The protein is U7-ctenitoxin-Pn1a of Phoneutria nigriventer (Brazilian armed spider).